A 114-amino-acid chain; its full sequence is NADH dehydrogenase [ubiquinone] 1 subunit C2, isoform 2 (114 aa).

Residues 56–75 form a helical membrane-spanning segment; sequence GLHRQLLYITAFFFAGYYLV.

This sequence belongs to the complex I NDUFC2 subunit family. Complex I is composed of 45 different subunits.

The protein localises to the mitochondrion inner membrane. Functionally, accessory subunit of the mitochondrial membrane respiratory chain NADH dehydrogenase (Complex I), that is believed not to be involved in catalysis. Complex I functions in the transfer of electrons from NADH to the respiratory chain. The immediate electron acceptor for the enzyme is believed to be ubiquinone. The chain is NADH dehydrogenase [ubiquinone] 1 subunit C2, isoform 2 (NDUFC2-KCTD14) from Homo sapiens (Human).